A 102-amino-acid polypeptide reads, in one-letter code: Integration host factor subunit alpha (102 aa).

The tract at residues 49 to 70 (FGNFQLRTKPQRPGRNPKTGEE) is disordered.

Belongs to the bacterial histone-like protein family. In terms of assembly, heterodimer of an alpha and a beta chain.

In terms of biological role, this protein is one of the two subunits of integration host factor, a specific DNA-binding protein that functions in genetic recombination as well as in transcriptional and translational control. The protein is Integration host factor subunit alpha of Nitrosomonas europaea (strain ATCC 19718 / CIP 103999 / KCTC 2705 / NBRC 14298).